A 388-amino-acid chain; its full sequence is MDLLNTLVEKGLRRELPSRAEALAVLATSDDDVLDVVAAAGKVRRHWFGRRVKLNYLVNLKSGLCPEDCSYCSQRLGSKAEILKYTWLKPDEASQAAAAGLAGGAKRVCLVASGRGPTDRDVDRVSDTIKAIKDQNEGVEVCACLGLLSDGQADRLREAGADAYNHNLNTSEGTYGDITTTHTYADRVETVQKAHAAGLSACSGLIAGMGETDEDLVDVVYSLRELDPDSVPVNFLIPFEGTPLAKEWNLTPQRCLRILAMVRFVCPDVEVRIAGGREVHLRTMQPLALHLANSIFLGDYLTSEGQAGKADLEMIADAGFEVEGADQVTLPEHRAPAGGCGSEQSAGCGSHEGGGACGSAPAPRTDEARTDLVAVRRRGAGTDLAPNA.

The 231-residue stretch at 47–277 (WFGRRVKLNY…DVEVRIAGGR (231 aa)) folds into the Radical SAM core domain. Residues Cys65, Cys69, and Cys72 each contribute to the [4Fe-4S] cluster site. Residues Cys109, Cys142, Cys202, and Arg272 each coordinate [2Fe-2S] cluster. Residues 335–371 (APAGGCGSEQSAGCGSHEGGGACGSAPAPRTDEARTD) are disordered.

Belongs to the radical SAM superfamily. Biotin synthase family. As to quaternary structure, homodimer. [4Fe-4S] cluster is required as a cofactor. It depends on [2Fe-2S] cluster as a cofactor.

It carries out the reaction (4R,5S)-dethiobiotin + (sulfur carrier)-SH + 2 reduced [2Fe-2S]-[ferredoxin] + 2 S-adenosyl-L-methionine = (sulfur carrier)-H + biotin + 2 5'-deoxyadenosine + 2 L-methionine + 2 oxidized [2Fe-2S]-[ferredoxin]. Its pathway is cofactor biosynthesis; biotin biosynthesis; biotin from 7,8-diaminononanoate: step 2/2. Catalyzes the conversion of dethiobiotin (DTB) to biotin by the insertion of a sulfur atom into dethiobiotin via a radical-based mechanism. The chain is Biotin synthase from Streptomyces avermitilis (strain ATCC 31267 / DSM 46492 / JCM 5070 / NBRC 14893 / NCIMB 12804 / NRRL 8165 / MA-4680).